The chain runs to 222 residues: MAAKPKLYYFNGRGRMESIRWLLAAAGVEFEEEFLETREQYEKMQKDGHLLFGQVPLVEIDGMMLTQTRAILSYLAAKYNLYGKDLKERVRIDMYADGTQDLMMMIAVAPFKTPKEKEESYDLILSRAKTRYFPVFEKILKDHGEAFLVGNQLSWADIQLLEAILMVEELSAPVLSDFPLLQAFKTRISNIPTIKKFLQPGSQRKPPPDGPYVEVVRTVLKF.

Methionine 1 carries the N-acetylmethionine modification. The GST N-terminal domain maps to 3–83 (AKPKLYYFNG…YLAAKYNLYG (81 aa)). Residues tyrosine 9, 53–55 (GQV), and 66–68 (TQT) each bind glutathione. Residues 85 to 208 (DLKERVRIDM…QPGSQRKPPP (124 aa)) enclose the GST C-terminal domain.

Belongs to the GST superfamily. Alpha family. As to quaternary structure, homodimer. In terms of processing, the N-terminus is blocked.

The protein localises to the cytoplasm. The enzyme catalyses RX + glutathione = an S-substituted glutathione + a halide anion + H(+). Its function is as follows. Conjugation of reduced glutathione to a wide number of exogenous and endogenous hydrophobic electrophiles. The polypeptide is Glutathione S-transferase A4 (Gsta4) (Mus musculus (Mouse)).